Consider the following 106-residue polypeptide: uncharacterized protein (106 aa).

It belongs to the csb family.

This is an uncharacterized protein from Dictyostelium discoideum (Social amoeba).